A 451-amino-acid polypeptide reads, in one-letter code: Ribonuclease J (451 aa).

Positions 84, 86, 88, 89, 155, and 177 each coordinate Zn(2+). Residue 384–388 (HVSGH) coordinates substrate. A Zn(2+)-binding site is contributed by His410.

The protein belongs to the metallo-beta-lactamase superfamily. RNA-metabolizing metallo-beta-lactamase-like family. Archaeal RNase J subfamily. Homodimer. Requires Zn(2+) as cofactor.

It is found in the cytoplasm. Its activity is regulated as follows. Inhibited by 1,10-phenanthroline. In terms of biological role, a highly processive 5'-3' exoribonuclease; no evidence has been seen for endonuclease activity. Prefers 5'-phosphate or 5'-hydroxyl ends; 5'-triphosphate substrates are very poorly degraded, does not degrade circular RNA. Does not degrade pre-tRNA(Trp) suggesting it is inhibited by strong secondary structures. Also degrades ssNDA but not dsDNA. The chain is Ribonuclease J from Pyrococcus abyssi (strain GE5 / Orsay).